A 445-amino-acid chain; its full sequence is Methionine aminopeptidase 2-1 (445 aa).

Residues 1–86 (MAAQASEDLQ…VQSEPPRVPL (86 aa)) form a disordered region. Acidic residues predominate over residues 34–46 (GEAEDDSDDDADE). The segment covering 59 to 74 (AKKKKKRKSKKKKKGG) has biased composition (basic residues). His198 provides a ligand contact to substrate. A divalent metal cation is bound by residues Asp218, Asp229, and His298. His306 lines the substrate pocket. Positions 331 and 426 each coordinate a divalent metal cation.

This sequence belongs to the peptidase M24A family. Methionine aminopeptidase eukaryotic type 2 subfamily. The cofactor is Co(2+). It depends on Zn(2+) as a cofactor. Mn(2+) serves as cofactor. Requires Fe(2+) as cofactor.

It is found in the cytoplasm. It carries out the reaction Release of N-terminal amino acids, preferentially methionine, from peptides and arylamides.. Functionally, cotranslationally removes the N-terminal methionine from nascent proteins. The N-terminal methionine is often cleaved when the second residue in the primary sequence is small and uncharged (Met-Ala-, Cys, Gly, Pro, Ser, Thr, or Val). This Aspergillus flavus (strain ATCC 200026 / FGSC A1120 / IAM 13836 / NRRL 3357 / JCM 12722 / SRRC 167) protein is Methionine aminopeptidase 2-1.